A 395-amino-acid chain; its full sequence is Chaperone protein DnaJ (395 aa).

Residues 4-69 (DYYEVLGVGR…DKRRRYDQFG (66 aa)) form the J domain. Residues 152–233 (GVEKTLKIKK…CHGEGIKQGE (82 aa)) form a CR-type zinc finger. 8 residues coordinate Zn(2+): Cys-165, Cys-168, Cys-181, Cys-184, Cys-207, Cys-210, Cys-221, and Cys-224. CXXCXGXG motif repeat units lie at residues 165–172 (CDVCNGTG), 181–188 (CPTCQGTG), 207–214 (CPTCGGEG), and 221–228 (CTACHGEG).

The protein belongs to the DnaJ family. In terms of assembly, homodimer. The cofactor is Zn(2+).

Its subcellular location is the cytoplasm. Its function is as follows. Participates actively in the response to hyperosmotic and heat shock by preventing the aggregation of stress-denatured proteins and by disaggregating proteins, also in an autonomous, DnaK-independent fashion. Unfolded proteins bind initially to DnaJ; upon interaction with the DnaJ-bound protein, DnaK hydrolyzes its bound ATP, resulting in the formation of a stable complex. GrpE releases ADP from DnaK; ATP binding to DnaK triggers the release of the substrate protein, thus completing the reaction cycle. Several rounds of ATP-dependent interactions between DnaJ, DnaK and GrpE are required for fully efficient folding. Also involved, together with DnaK and GrpE, in the DNA replication of plasmids through activation of initiation proteins. This Prosthecochloris aestuarii (strain DSM 271 / SK 413) protein is Chaperone protein DnaJ.